We begin with the raw amino-acid sequence, 885 residues long: GPI ethanolamine phosphate transferase 2 (885 aa).

N-linked (GlcNAc...) asparagine glycosylation is found at Asn82, Asn155, and Asn194. A helical membrane pass occupies residues 413-433 (DIYAGALILVITALAVIVVFN). Asn443 carries an N-linked (GlcNAc...) asparagine glycan. Helical transmembrane passes span 447 to 467 (VMFY…SSLI), 473 to 493 (IWYF…FDTF), and 495 to 514 (SLQN…FMRS). N-linked (GlcNAc...) asparagine glycosylation is present at Asn516. Helical transmembrane passes span 539 to 559 (LMWG…YIQG), 581 to 601 (GLIS…FKLL), 648 to 668 (IQLS…RVII), 697 to 717 (ENIP…KLIY), 726 to 746 (YILT…FCMG), 768 to 788 (VFLV…FWSL), 820 to 840 (ILLV…VNLV), and 865 to 885 (SWIL…VLLF).

It belongs to the PIGG/PIGN/PIGO family. PIGG subfamily.

The protein resides in the endoplasmic reticulum membrane. Its pathway is glycolipid biosynthesis; glycosylphosphatidylinositol-anchor biosynthesis. Ethanolamine phosphate transferase involved in glycosylphosphatidylinositol-anchor biosynthesis. Transfers ethanolamine phosphate to the GPI second mannose. This is GPI ethanolamine phosphate transferase 2 (GPI7) from Candida albicans (strain SC5314 / ATCC MYA-2876) (Yeast).